Here is a 628-residue protein sequence, read N- to C-terminus: uncharacterized protein (628 aa).

Belongs to the IucA/IucC family.

This is an uncharacterized protein from Sinorhizobium fredii (strain NBRC 101917 / NGR234).